A 763-amino-acid chain; its full sequence is Amine oxidase [copper-containing] 3 (763 aa).

Residues threonine 2 to threonine 6 lie on the Cytoplasmic side of the membrane. Residues leucine 7 to glycine 27 form a helical; Signal-anchor for type II membrane protein membrane-spanning segment. The Extracellular segment spans residues arginine 28–lysine 763. An N-linked (GlcNAc...) asparagine glycan is attached at asparagine 137. Cysteine 198 and cysteine 199 form a disulfide bridge. N-linked (GlcNAc...) asparagine glycosylation is found at asparagine 232 and asparagine 294. The active-site Proton acceptor is aspartate 386. Cysteine 404 and cysteine 430 are disulfide-bonded. Tyrosine 471 serves as the catalytic Schiff-base intermediate with substrate; via topaquinone. Position 471 is a 2',4',5'-topaquinone (tyrosine 471). 2 residues coordinate Cu(2+): histidine 520 and histidine 522. Residues aspartate 529, leucine 530, aspartate 531, and glutamate 572 each contribute to the Ca(2+) site. Asparagine 581 and asparagine 592 each carry an N-linked (GlcNAc...) asparagine glycan. Residues glutamate 641 and phenylalanine 663 each coordinate Ca(2+). Asparagine 666 carries N-linked (GlcNAc...) asparagine glycosylation. 3 residues coordinate Ca(2+): glutamate 667, aspartate 673, and leucine 674. Residue histidine 684 participates in Cu(2+) binding. A disulfide bridge links cysteine 734 with cysteine 741.

The protein belongs to the copper/topaquinone oxidase family. Homodimer; disulfide-linked. Probably forms heterodimers with AOC2. The cofactor is Cu(2+). Ca(2+) serves as cofactor. Requires L-topaquinone as cofactor. In terms of processing, topaquinone (TPQ) is generated by copper-dependent autoxidation of a specific tyrosyl residue. Post-translationally, N- and O-glycosylated. Highly expressed in adipocytes, aorta and lung. Expressed at lower levels in heart, kidney, large intestine, liver, small intestine and stomach.

It localises to the cell membrane. The catalysed reaction is methylamine + O2 + H2O = formaldehyde + H2O2 + NH4(+). It carries out the reaction benzylamine + O2 + H2O = benzaldehyde + H2O2 + NH4(+). The enzyme catalyses 2-phenylethylamine + O2 + H2O = 2-phenylacetaldehyde + H2O2 + NH4(+). Functionally, catalyzes the oxidative deamination of primary amines to the corresponding aldehydes with the concomitant production of hydrogen peroxide and ammonia. Has a preference for the primary monoamines methylamine and benzylamine. Could also act on 2-phenylethylamine but much less efficiently. At endothelial cells surface can also function as a cell adhesion protein that participates in lymphocyte extravasation and recirculation by mediating the binding of lymphocytes to peripheral lymph node vascular endothelial cells in an L-selectin-independent fashion. In Rattus norvegicus (Rat), this protein is Amine oxidase [copper-containing] 3.